The primary structure comprises 390 residues: HIT domain-containing protein DDB_G0272839 (390 aa).

The disordered stretch occupies residues 168–201 (DNENEKEKEKEMELDNDNTNTESIPPITSKSTST). Low complexity predominate over residues 184-201 (DNTNTESIPPITSKSTST). Residues 232–343 (YFCNKPESFL…ISNDYNTKYL (112 aa)) form the HIT domain.

The polypeptide is HIT domain-containing protein DDB_G0272839 (Dictyostelium discoideum (Social amoeba)).